A 284-amino-acid polypeptide reads, in one-letter code: Succinate dehydrogenase [ubiquinone] iron-sulfur subunit, mitochondrial (284 aa).

Residues 1 to 26 (MAAVVFSLRRSGPVFRLPGVLQVCRG) constitute a mitochondrion transit peptide. Residues 44–137 (KKFAIYRWDP…VSKIYPLPHM (94 aa)) enclose the 2Fe-2S ferredoxin-type domain. Residues C97, C102, C105, and C117 each contribute to the [2Fe-2S] cluster site. Residues 180-210 (DRDKLDGLYECILCACCSTSCPSYWWNADKY) enclose the 4Fe-4S ferredoxin-type domain. Positions 190, 193, and 196 each coordinate [4Fe-4S] cluster. [3Fe-4S] cluster is bound at residue C200. An a ubiquinone-binding site is contributed by W205. [3Fe-4S] cluster contacts are provided by C247 and C253. C257 is a binding site for [4Fe-4S] cluster.

The protein belongs to the succinate dehydrogenase/fumarate reductase iron-sulfur protein family. Component of complex II composed of four subunits: the flavoprotein (FP) sdha, iron-sulfur protein (IP) sdhb, and a cytochrome b composed of sdhc and sdhd. It depends on [2Fe-2S] cluster as a cofactor. The cofactor is [3Fe-4S] cluster. [4Fe-4S] cluster is required as a cofactor.

The protein resides in the mitochondrion inner membrane. The enzyme catalyses a quinone + succinate = fumarate + a quinol. It catalyses the reaction (R)-malate + a quinone = enol-oxaloacetate + a quinol. The catalysed reaction is (S)-malate + a quinone = enol-oxaloacetate + a quinol. It functions in the pathway carbohydrate metabolism; tricarboxylic acid cycle; fumarate from succinate (eukaryal route): step 1/1. Its activity is regulated as follows. Enol-oxaloacetate inhibits the succinate dehydrogenase activity. Functionally, iron-sulfur protein (IP) subunit of the succinate dehydrogenase complex (mitochondrial respiratory chain complex II), responsible for transferring electrons from succinate to ubiquinone (coenzyme Q). SDH also oxidizes malate to the non-canonical enol form of oxaloacetate, enol-oxaloacetate. Enol-oxaloacetate, which is a potent inhibitor of the succinate dehydrogenase activity, is further isomerized into keto-oxaloacetate. This is Succinate dehydrogenase [ubiquinone] iron-sulfur subunit, mitochondrial (sdhb) from Xenopus tropicalis (Western clawed frog).